The chain runs to 291 residues: Oxidative stress-responsive serine-rich protein 1 (291 aa).

Residues 48-174 (EDAKPKSACA…SSDAPQVSQA (127 aa)) form a disordered region. Basic residues predominate over residues 65–83 (STRKSSRGAVRTQRRRRSK). Positions 132–142 (ECSSSLDTNHT) are enriched in polar residues. 2 positions are modified to phosphothreonine: Thr142 and Thr232.

The chain is Oxidative stress-responsive serine-rich protein 1 (OSER1) from Bos taurus (Bovine).